We begin with the raw amino-acid sequence, 210 residues long: MGQKVNPIGFRLGVIKTWDSKWYAEKDFAKLLHEDLKLKSFLKKRLYHSGVSKIEIERAAGKAKINIYTARPGLIIGKKGSEVETLKKELAKLTDKEVYLNIQEVRKPELDAQLVSENIALQLERRVAFRRAMKKSVTSSLKFGAKGIRITCSGRLGGAEMSRTEWYREGRVPLHTLRADIDYGFAEAKTTYGIIGVKVLIFKGEVLSGK.

The 69-residue stretch at 38-106 (LKSFLKKRLY…EVYLNIQEVR (69 aa)) folds into the KH type-2 domain.

This sequence belongs to the universal ribosomal protein uS3 family. As to quaternary structure, part of the 30S ribosomal subunit. Forms a tight complex with proteins S10 and S14.

Binds the lower part of the 30S subunit head. Binds mRNA in the 70S ribosome, positioning it for translation. In Geotalea daltonii (strain DSM 22248 / JCM 15807 / FRC-32) (Geobacter daltonii), this protein is Small ribosomal subunit protein uS3.